The chain runs to 60 residues: Large ribosomal subunit protein bL32 (60 aa).

Positions 1–21 are disordered; the sequence is MAVPARHTSKAKKNKRRTHYK. Positions 7-20 are enriched in basic residues; that stretch reads HTSKAKKNKRRTHY.

Belongs to the bacterial ribosomal protein bL32 family.

The sequence is that of Large ribosomal subunit protein bL32 from Streptococcus equi subsp. zooepidemicus (strain H70).